Reading from the N-terminus, the 563-residue chain is Eukaryotic translation initiation factor 3 subunit D-1 (563 aa).

The disordered stretch occupies residues 98–167 (VQKPPHQRGR…GPPPKMRESS (70 aa)). Over residues 100–121 (KPPHQRGRFRNMRNSRSGRGRN) the composition is skewed to basic residues. Residue T128 is modified to Phosphothreonine. The RNA gate stretch occupies residues 291–305 (EFDLLTVNESSVEPP).

Belongs to the eIF-3 subunit D family. In terms of assembly, component of the eukaryotic translation initiation factor 3 (eIF-3) complex. The eIF-3 complex interacts with pix.

The protein resides in the cytoplasm. Its function is as follows. mRNA cap-binding component of the eukaryotic translation initiation factor 3 (eIF-3) complex, which is involved in protein synthesis of a specialized repertoire of mRNAs and, together with other initiation factors, stimulates binding of mRNA and methionyl-tRNAi to the 40S ribosome. The eIF-3 complex specifically targets and initiates translation of a subset of mRNAs involved in cell proliferation. In the eIF-3 complex, eif3d specifically recognizes and binds the 7-methylguanosine cap of a subset of mRNAs. The polypeptide is Eukaryotic translation initiation factor 3 subunit D-1 (Drosophila grimshawi (Hawaiian fruit fly)).